Reading from the N-terminus, the 412-residue chain is Histidine--tRNA ligase (412 aa).

Belongs to the class-II aminoacyl-tRNA synthetase family. Homodimer.

It localises to the cytoplasm. It carries out the reaction tRNA(His) + L-histidine + ATP = L-histidyl-tRNA(His) + AMP + diphosphate + H(+). The sequence is that of Histidine--tRNA ligase from Maridesulfovibrio salexigens (strain ATCC 14822 / DSM 2638 / NCIMB 8403 / VKM B-1763) (Desulfovibrio salexigens).